Reading from the N-terminus, the 264-residue chain is Indole-3-glycerol phosphate synthase (264 aa).

The protein belongs to the TrpC family.

The enzyme catalyses 1-(2-carboxyphenylamino)-1-deoxy-D-ribulose 5-phosphate + H(+) = (1S,2R)-1-C-(indol-3-yl)glycerol 3-phosphate + CO2 + H2O. It functions in the pathway amino-acid biosynthesis; L-tryptophan biosynthesis; L-tryptophan from chorismate: step 4/5. In Stenotrophomonas maltophilia (strain K279a), this protein is Indole-3-glycerol phosphate synthase.